A 188-amino-acid chain; its full sequence is dCTP deaminase (188 aa).

109 to 114 (KSTYAR) provides a ligand contact to dCTP. Residue glutamate 135 is the Proton donor/acceptor of the active site. Residues glutamine 154, tyrosine 168, and glutamine 178 each coordinate dCTP.

This sequence belongs to the dCTP deaminase family. Homotrimer.

The catalysed reaction is dCTP + H2O + H(+) = dUTP + NH4(+). The protein operates within pyrimidine metabolism; dUMP biosynthesis; dUMP from dCTP (dUTP route): step 1/2. In terms of biological role, catalyzes the deamination of dCTP to dUTP. This chain is dCTP deaminase, found in Helicobacter pylori (strain P12).